We begin with the raw amino-acid sequence, 1014 residues long: Nebulette (1014 aa).

The interval methionine 1–glutamate 24 is disordered. The segment covering isoleucine 9–glutamate 24 has biased composition (acidic residues). Nebulin repeat units follow at residues phenylalanine 29–aspartate 63, lysine 64–asparagine 99, serine 100–phenylalanine 136, serine 137–threonine 172, tyrosine 173–asparagine 205, lysine 206–aspartate 241, lysine 242–aspartate 278, proline 279–glycine 313, methionine 314–glycine 348, lysine 349–glycine 385, arginine 386–glycine 422, lysine 423–glycine 459, lysine 460–glycine 496, lysine 497–glycine 533, lysine 534–serine 569, asparagine 570–valine 599, glycine 600–alanine 635, isoleucine 636–proline 666, valine 667–glutamine 693, arginine 694–threonine 728, leucine 729–glycine 759, arginine 760–glycine 794, and arginine 795–glutamate 830. Aspartate 96 bears the Omega-N-methylarginine mark. An Omega-N-methylarginine modification is found at arginine 795. The interval glycine 836–serine 953 is linker. The SH3 domain maps to proline 954–asparagine 1014.

Interacts (via nebulin repeats 1-5) with DESM (via rod region). Interacts (via SH3 domain) with XIRP2. As to quaternary structure, interacts with ZYX/Zyxin. In terms of tissue distribution, abundantly expressed in cardiac muscle, but not in skeletal or smooth muscle. Localized to Z-lines in cardiac cells and to dense bodies in nonmuscle cells. Isoform 2 is expressed in non-muscle cells such as in fibroblasts.

Its subcellular location is the cytoplasm. Its function is as follows. Binds to actin and plays an important role in the assembly of the Z-disk. May functionally link sarcomeric actin to the desmin intermediate filaments in the heart muscle sarcomeres. May play a role in the assembly of focal adhesions. The chain is Nebulette from Homo sapiens (Human).